The sequence spans 328 residues: DNA-directed RNA polymerase subunit alpha (328 aa).

Residues 1-232 (MHNSLAELIK…QHLAILVDLK (232 aa)) form an alpha N-terminal domain (alpha-NTD) region. Positions 246 to 328 (FDPLLLHPVD…PPEGLKKLNQ (83 aa)) are alpha C-terminal domain (alpha-CTD).

It belongs to the RNA polymerase alpha chain family. In terms of assembly, homodimer. The RNAP catalytic core consists of 2 alpha, 1 beta, 1 beta' and 1 omega subunit. When a sigma factor is associated with the core the holoenzyme is formed, which can initiate transcription.

The enzyme catalyses RNA(n) + a ribonucleoside 5'-triphosphate = RNA(n+1) + diphosphate. Functionally, DNA-dependent RNA polymerase catalyzes the transcription of DNA into RNA using the four ribonucleoside triphosphates as substrates. This is DNA-directed RNA polymerase subunit alpha from Methylococcus capsulatus (strain ATCC 33009 / NCIMB 11132 / Bath).